Consider the following 509-residue polypeptide: Lysine--tRNA ligase (509 aa).

Mg(2+) is bound by residues glutamate 418 and glutamate 425.

Belongs to the class-II aminoacyl-tRNA synthetase family. As to quaternary structure, homodimer. Requires Mg(2+) as cofactor.

The protein resides in the cytoplasm. The enzyme catalyses tRNA(Lys) + L-lysine + ATP = L-lysyl-tRNA(Lys) + AMP + diphosphate. The polypeptide is Lysine--tRNA ligase (Acinetobacter baumannii (strain ATCC 17978 / DSM 105126 / CIP 53.77 / LMG 1025 / NCDC KC755 / 5377)).